We begin with the raw amino-acid sequence, 453 residues long: Retroviral integration site protein Fli-1 homolog (453 aa).

Residues 111-197 enclose the PNT domain; it reads PPPPNMTTNE…SHLNYLRDSS (87 aa). The span at 201–214 shows a compositional bias: polar residues; it reads GYNTQAHTDQSSRL. A disordered region spans residues 201 to 273; that stretch reads GYNTQAHTDQ…YQILGPTSSR (73 aa). Residues 215–226 are compositionally biased toward basic and acidic residues; the sequence is TAKEDPSYEAVR. 2 stretches are compositionally biased toward polar residues: residues 230–239 and 246–273; these read WGNSMSSPVT and GTQN…TSSR. Positions 282 to 362 form a DNA-binding region, ETS; the sequence is IQLWQFLLEL…HGKRYAYKFD (81 aa).

The protein belongs to the ETS family.

It is found in the nucleus. The polypeptide is Retroviral integration site protein Fli-1 homolog (fli1) (Xenopus laevis (African clawed frog)).